A 725-amino-acid polypeptide reads, in one-letter code: 1,4-alpha-glucan branching enzyme GlgB (725 aa).

Aspartate 403 functions as the Nucleophile in the catalytic mechanism. Glutamate 456 functions as the Proton donor in the catalytic mechanism.

This sequence belongs to the glycosyl hydrolase 13 family. GlgB subfamily. Monomer.

It carries out the reaction Transfers a segment of a (1-&gt;4)-alpha-D-glucan chain to a primary hydroxy group in a similar glucan chain.. It participates in glycan biosynthesis; glycogen biosynthesis. Catalyzes the formation of the alpha-1,6-glucosidic linkages in glycogen by scission of a 1,4-alpha-linked oligosaccharide from growing alpha-1,4-glucan chains and the subsequent attachment of the oligosaccharide to the alpha-1,6 position. The polypeptide is 1,4-alpha-glucan branching enzyme GlgB (Pectobacterium atrosepticum (strain SCRI 1043 / ATCC BAA-672) (Erwinia carotovora subsp. atroseptica)).